Reading from the N-terminus, the 200-residue chain is Lipopolysaccharide core heptose(II)-phosphate phosphatase (200 aa).

The signal sequence occupies residues 1–25 (MLAFCRSSLKSKKYFIILLALAAIA).

This sequence belongs to the phosphoglycerate mutase family. Ais subfamily.

Its subcellular location is the periplasm. It participates in bacterial outer membrane biogenesis; lipopolysaccharide metabolism. Its function is as follows. Catalyzes the dephosphorylation of heptose(II) of the outer membrane lipopolysaccharide core. This Escherichia coli (strain SE11) protein is Lipopolysaccharide core heptose(II)-phosphate phosphatase.